A 290-amino-acid chain; its full sequence is ATP synthase gamma chain (290 aa).

The protein belongs to the ATPase gamma chain family. In terms of assembly, F-type ATPases have 2 components, CF(1) - the catalytic core - and CF(0) - the membrane proton channel. CF(1) has five subunits: alpha(3), beta(3), gamma(1), delta(1), epsilon(1). CF(0) has three main subunits: a, b and c.

Its subcellular location is the cell membrane. Functionally, produces ATP from ADP in the presence of a proton gradient across the membrane. The gamma chain is believed to be important in regulating ATPase activity and the flow of protons through the CF(0) complex. The polypeptide is ATP synthase gamma chain (Chloroflexus aurantiacus (strain ATCC 29366 / DSM 635 / J-10-fl)).